Here is an 84-residue protein sequence, read N- to C-terminus: uncharacterized protein (84 aa).

The LITAF domain maps to methionine 1–isoleucine 83. Zn(2+) contacts are provided by cysteine 21 and cysteine 24. The membrane-binding amphipathic helix stretch occupies residues methionine 39–cysteine 61. Zn(2+)-binding residues include cysteine 71 and cysteine 74.

Its subcellular location is the host membrane. This is an uncharacterized protein from Dryophytes versicolor (chameleon treefrog).